The primary structure comprises 776 residues: LPS-assembly protein LptD (776 aa).

Residues 1 to 24 (MQHFSRTFLAASIATALFAPYAQA) form the signal peptide.

It belongs to the LptD family. As to quaternary structure, component of the lipopolysaccharide transport and assembly complex. Interacts with LptE and LptA.

The protein resides in the cell outer membrane. In terms of biological role, together with LptE, is involved in the assembly of lipopolysaccharide (LPS) at the surface of the outer membrane. This chain is LPS-assembly protein LptD, found in Vibrio vulnificus (strain CMCP6).